The primary structure comprises 635 residues: Threonine--tRNA ligase (635 aa).

Residues 1–61 enclose the TGS domain; sequence MVSIRLPDGS…DHDVALAIVT (61 aa). Residues 242–533 form a catalytic region; it reads DHRKLGKQLD…LIEHHAGAMP (292 aa). Zn(2+) is bound by residues Cys333, His384, and His510.

The protein belongs to the class-II aminoacyl-tRNA synthetase family. As to quaternary structure, homodimer. Zn(2+) serves as cofactor.

It is found in the cytoplasm. The catalysed reaction is tRNA(Thr) + L-threonine + ATP = L-threonyl-tRNA(Thr) + AMP + diphosphate + H(+). Its function is as follows. Catalyzes the attachment of threonine to tRNA(Thr) in a two-step reaction: L-threonine is first activated by ATP to form Thr-AMP and then transferred to the acceptor end of tRNA(Thr). Also edits incorrectly charged L-seryl-tRNA(Thr). This chain is Threonine--tRNA ligase, found in Paraburkholderia phytofirmans (strain DSM 17436 / LMG 22146 / PsJN) (Burkholderia phytofirmans).